Here is a 187-residue protein sequence, read N- to C-terminus: Sodium/potassium ATPase inhibitor SPAI-2 (187 aa).

The N-terminal stretch at methionine 1 to alanine 21 is a signal peptide. Glutamine 22 bears the Pyrrolidone carboxylic acid mark. Positions glutamine 22–aspartate 126 are excised as a propeptide. The disordered stretch occupies residues arginine 28–aspartate 98. Tandem repeats lie at residues glycine 34 to glutamate 39, glycine 40 to glutamate 45, glycine 46 to lysine 51, glycine 58 to lysine 63, glycine 64 to lysine 69, glycine 70 to lysine 75, glycine 76 to lysine 81, glycine 82 to lysine 87, serine 88 to lysine 93, glycine 100 to lysine 105, glycine 106 to glutamate 111, glycine 112 to asparagine 117, alanine 118 to lysine 123, and valine 124 to lysine 129. Positions glycine 34–lysine 129 are 14 X 6 AA approximate tandem repeats. An SVP-1 clotting 1 repeat occupies glycine 64–leucine 85. The WAP domain maps to leucine 139–lysine 187. 4 disulfides stabilise this stretch: cysteine 146-cysteine 175, cysteine 153-cysteine 179, cysteine 162-cysteine 174, and cysteine 168-cysteine 183.

Post-translationally, the short form (AA 127-187) may be an artifact due to the strongly acidic conditions of the duodenum. The pro-SPAI form may be the native form. Small intestine &gt; large intestine. The plasma contains the pro-SPAI form circulating.

In terms of biological role, inhibits Na(+),K(+) ATPase by the competitive mode against Na(+). This Sus scrofa (Pig) protein is Sodium/potassium ATPase inhibitor SPAI-2.